The sequence spans 227 residues: Cytidylate kinase (227 aa).

10–18 (GPASSGKST) contributes to the ATP binding site.

It belongs to the cytidylate kinase family. Type 1 subfamily.

It is found in the cytoplasm. The enzyme catalyses CMP + ATP = CDP + ADP. It carries out the reaction dCMP + ATP = dCDP + ADP. In Streptococcus agalactiae serotype V (strain ATCC BAA-611 / 2603 V/R), this protein is Cytidylate kinase.